The primary structure comprises 592 residues: Aspartate--tRNA(Asp/Asn) ligase (592 aa).

Glutamate 171 provides a ligand contact to L-aspartate. Residues 195 to 198 (QLFK) form an aspartate region. Arginine 217 contributes to the L-aspartate binding site. ATP-binding positions include 217–219 (RDE) and glutamine 226. L-aspartate is bound at residue histidine 447. ATP is bound at residue glutamate 481. Arginine 488 provides a ligand contact to L-aspartate. 533–536 (GLDR) is a binding site for ATP.

The protein belongs to the class-II aminoacyl-tRNA synthetase family. Type 1 subfamily. Homodimer.

The protein resides in the cytoplasm. It carries out the reaction tRNA(Asx) + L-aspartate + ATP = L-aspartyl-tRNA(Asx) + AMP + diphosphate. Aspartyl-tRNA synthetase with relaxed tRNA specificity since it is able to aspartylate not only its cognate tRNA(Asp) but also tRNA(Asn). Reaction proceeds in two steps: L-aspartate is first activated by ATP to form Asp-AMP and then transferred to the acceptor end of tRNA(Asp/Asn). This Psychromonas ingrahamii (strain DSM 17664 / CCUG 51855 / 37) protein is Aspartate--tRNA(Asp/Asn) ligase.